A 690-amino-acid polypeptide reads, in one-letter code: Dual specificity protein kinase lkh1 (690 aa).

The tract at residues 39–70 (PNLPPPFSVHQLQSFVPPQPPSSSSPSTTGTV) is disordered. The Protein kinase domain occupies 362–682 (YTVVRLLGHG…AKEALWHPFF (321 aa)). ATP-binding positions include 368 to 376 (LGHGTFGKV) and K391. D488 serves as the catalytic Proton acceptor.

This sequence belongs to the protein kinase superfamily. CMGC Ser/Thr protein kinase family. Lammer subfamily. Post-translationally, autophosphorylates on all three types of residues.

It carries out the reaction L-seryl-[protein] + ATP = O-phospho-L-seryl-[protein] + ADP + H(+). The catalysed reaction is L-threonyl-[protein] + ATP = O-phospho-L-threonyl-[protein] + ADP + H(+). It catalyses the reaction L-tyrosyl-[protein] + ATP = O-phospho-L-tyrosyl-[protein] + ADP + H(+). Functionally, protein kinase that may act as a negative regulator of filamentous growth and flocculation. Appears to have a role in normal cell wall and septum formation and in cell separation. May have antagonistic function in the regulation of beta-glucan distribution between the sites for cell wall and septum assembly. The sequence is that of Dual specificity protein kinase lkh1 (lkh1) from Schizosaccharomyces pombe (strain 972 / ATCC 24843) (Fission yeast).